The following is a 1143-amino-acid chain: Exportin-T (1143 aa).

Residues alanine 566–serine 593 are disordered. Over residues serine 576–serine 593 the composition is skewed to polar residues.

It belongs to the exportin family.

It localises to the nucleus. Its subcellular location is the cytoplasm. Its function is as follows. tRNA nucleus export receptor which facilitates tRNA translocation across the nuclear pore complex. Involved in pre-tRNA splicing, probably by affecting the interaction of pre-tRNA with splicing endonuclease. This chain is Exportin-T (LOS1), found in Cryptococcus neoformans var. neoformans serotype D (strain JEC21 / ATCC MYA-565) (Filobasidiella neoformans).